An 841-amino-acid chain; its full sequence is Protein NLP6 (841 aa).

Residues 539 to 624 form the RWP-RK domain; sequence EAKTVKKSER…IDSVQGADGS (86 aa). The disordered stretch occupies residues 649–682; it reads NCPPTSTSPLSNLQDVKIENRDAEDSAGSSTSRA. Positions 651 to 662 are enriched in polar residues; that stretch reads PPTSTSPLSNLQ. The PB1 domain occupies 741–823; sequence LVSIKATYRE…NTLRLSVHDV (83 aa).

It is found in the nucleus. In terms of biological role, probable transcription factor. The sequence is that of Protein NLP6 (NLP6) from Arabidopsis thaliana (Mouse-ear cress).